A 544-amino-acid polypeptide reads, in one-letter code: Chaperonin GroEL 2 (544 aa).

Residues 29 to 32 (TLGP), 86 to 90 (DGTTT), Gly413, 479 to 481 (NAA), and Asp495 contribute to the ATP site.

Belongs to the chaperonin (HSP60) family. Forms a cylinder of 14 subunits composed of two heptameric rings stacked back-to-back. Interacts with the co-chaperonin GroES.

The protein resides in the cytoplasm. The catalysed reaction is ATP + H2O + a folded polypeptide = ADP + phosphate + an unfolded polypeptide.. Its function is as follows. Together with its co-chaperonin GroES, plays an essential role in assisting protein folding. The GroEL-GroES system forms a nano-cage that allows encapsulation of the non-native substrate proteins and provides a physical environment optimized to promote and accelerate protein folding. This chain is Chaperonin GroEL 2, found in Prochlorococcus marinus subsp. pastoris (strain CCMP1986 / NIES-2087 / MED4).